The sequence spans 515 residues: Cytidine and dCMP deaminase domain-containing protein 1 (515 aa).

Composition is skewed to polar residues over residues 1 to 11 (MKEAGQMQNLE) and 18 to 27 (SVSTQTGSMT). Disordered regions lie at residues 1–27 (MKEAGQMQNLESARAGRSVSTQTGSMT) and 56–83 (RQKSQKNEEGKHGPLGDNEEMTRVSTDK). The span at 60–83 (QKNEEGKHGPLGDNEEMTRVSTDK) shows a compositional bias: basic and acidic residues. Positions 71–169 (GDNEEMTRVS…SLLTEASSSE (99 aa)) constitute a CMP/dCMP-type deaminase 1 domain. Zn(2+)-binding residues include histidine 110, cysteine 135, and cysteine 138. Residues 272-284 (NLRQNMKDLILLL) carry the Nuclear export signal motif. The region spanning 318–483 (EIARHCMVQA…LNPSEAYGLE (166 aa)) is the CMP/dCMP-type deaminase 2 domain. Histidine 399 lines the Zn(2+) pocket. Glutamate 401 acts as the Proton donor in catalysis. Zn(2+) contacts are provided by cysteine 427 and cysteine 430. Residues 481 to 515 (GLEQNEPERRENGVLRPVPQKEEQHQDKKLRLGIH) are disordered. Residues 486-515 (EPERRENGVLRPVPQKEEQHQDKKLRLGIH) are compositionally biased toward basic and acidic residues. The Bipartite nuclear localization signal signature appears at 489 to 511 (RRENGVLRPVPQKEEQHQDKKLR).

It belongs to the cytidine and deoxycytidylate deaminase family. Zn(2+) serves as cofactor.

It localises to the cytoplasm. The protein resides in the nucleus. It catalyses the reaction 2'-deoxycytidine + H2O + H(+) = 2'-deoxyuridine + NH4(+). It carries out the reaction cytidine + H2O + H(+) = uridine + NH4(+). In terms of biological role, catalyzes the deamination of cytidine and deoxycytidine into uridine and deoxyuridine, respectively. May play an important role in testicular development and spermatogenesis. The chain is Cytidine and dCMP deaminase domain-containing protein 1 (CDADC1) from Macaca fascicularis (Crab-eating macaque).